A 341-amino-acid polypeptide reads, in one-letter code: MSTNIAINGMGRIGRMVLRIALQNKNLNVVAINASYPPETIAHLINYDTTHGKYNLKVEPIENGLQVGDHKIKLVADRNPENLPWKELDIDIAIDATGKFNHGDKAIAHIKAGAKKVLLTGPSKGGHVQMVVKGVNDNQLDIEAFDIFSNASCTTNCIGPVAKVLNNQFGIVNGLMTTVHAITNDQKNIDNPHKDLRRARSCNESIIPTSTGAAKALKEVLPELEGKLHGMALRVPTKNVSLVDLVVDLEKEVTAEEVNQAFENAGLEGIIEVEHQPLVSVDFNTNPNSAIIDAKSTMVMSGNKVKVIAWYDNEWGYSNRVVDVAEQIGALLTSKETVSAS.

NAD(+) contacts are provided by residues 12 to 13 (RI), Arg78, and Thr120. D-glyceraldehyde 3-phosphate is bound by residues 152–154 (SCT) and Thr183. Catalysis depends on Cys153, which acts as the Nucleophile. Asn184 lines the NAD(+) pocket. D-glyceraldehyde 3-phosphate-binding positions include Arg198, 211–212 (TG), and Arg234. An NAD(+)-binding site is contributed by Asn313.

The protein belongs to the glyceraldehyde-3-phosphate dehydrogenase family. As to quaternary structure, homotetramer.

It localises to the cytoplasm. The enzyme catalyses D-glyceraldehyde 3-phosphate + phosphate + NAD(+) = (2R)-3-phospho-glyceroyl phosphate + NADH + H(+). The protein operates within carbohydrate degradation; glycolysis; pyruvate from D-glyceraldehyde 3-phosphate: step 1/5. Functionally, catalyzes the oxidative phosphorylation of glyceraldehyde 3-phosphate (G3P) to 1,3-bisphosphoglycerate (BPG) using the cofactor NAD. The first reaction step involves the formation of a hemiacetal intermediate between G3P and a cysteine residue, and this hemiacetal intermediate is then oxidized to a thioester, with concomitant reduction of NAD to NADH. The reduced NADH is then exchanged with the second NAD, and the thioester is attacked by a nucleophilic inorganic phosphate to produce BPG. This chain is Glyceraldehyde-3-phosphate dehydrogenase 2 (gapA2), found in Staphylococcus aureus (strain COL).